Here is a 349-residue protein sequence, read N- to C-terminus: Magnesium-protoporphyrin IX monomethyl ester [oxidative] cyclase (349 aa).

Positions 1-10 (MTATTATAPA) are enriched in low complexity. The segment at 1–23 (MTATTATAPAMRGGGRNELPPHL) is disordered.

It belongs to the AcsF family. The cofactor is Fe cation.

It carries out the reaction Mg-protoporphyrin IX 13-monomethyl ester + 3 NADPH + 3 O2 + 2 H(+) = 3,8-divinyl protochlorophyllide a + 3 NADP(+) + 5 H2O. It participates in porphyrin-containing compound metabolism; chlorophyll biosynthesis (light-independent). Catalyzes the formation of the isocyclic ring in chlorophyll biosynthesis. Mediates the cyclase reaction, which results in the formation of divinylprotochlorophyllide (Pchlide) characteristic of all chlorophylls from magnesium-protoporphyrin IX 13-monomethyl ester (MgPMME). This chain is Magnesium-protoporphyrin IX monomethyl ester [oxidative] cyclase, found in Prochlorococcus marinus (strain MIT 9303).